We begin with the raw amino-acid sequence, 331 residues long: Nucleoporin Nup35 (331 aa).

Disordered regions lie at residues 1–63 (MEPM…HELN) and 79–110 (AHTA…GLFD). Polar residues-rich tracts occupy residues 8-20 (SPVN…QTQY), 35-56 (HKNT…SPGG), and 84-104 (GANS…TGPP). Residues 187–268 (RLSDFWVTIF…SRCTDRSVID (82 aa)) form the RRM Nup35-type domain.

The protein belongs to the Nup35 family. As to quaternary structure, interacts with Nup154.

The protein localises to the nucleus. The protein resides in the nuclear pore complex. Functions as a component of the nuclear pore complex (NPC). May have a role in the organization of the inner nuclear membrane proteins at the nuclear envelope together with Nup154. The sequence is that of Nucleoporin Nup35 from Drosophila melanogaster (Fruit fly).